A 120-amino-acid chain; its full sequence is Large ribosomal subunit protein uL18 (120 aa).

The protein belongs to the universal ribosomal protein uL18 family. In terms of assembly, part of the 50S ribosomal subunit; part of the 5S rRNA/L5/L18/L25 subcomplex. Contacts the 5S and 23S rRNAs.

Functionally, this is one of the proteins that bind and probably mediate the attachment of the 5S RNA into the large ribosomal subunit, where it forms part of the central protuberance. In Clostridium novyi (strain NT), this protein is Large ribosomal subunit protein uL18.